Consider the following 105-residue polypeptide: Iron-sulfur cluster assembly protein CyaY (105 aa).

This sequence belongs to the frataxin family.

In terms of biological role, involved in iron-sulfur (Fe-S) cluster assembly. May act as a regulator of Fe-S biogenesis. The polypeptide is Iron-sulfur cluster assembly protein CyaY (Psychromonas ingrahamii (strain DSM 17664 / CCUG 51855 / 37)).